A 507-amino-acid chain; its full sequence is Maturase K (507 aa).

It belongs to the intron maturase 2 family. MatK subfamily.

Its subcellular location is the plastid. It localises to the chloroplast. Usually encoded in the trnK tRNA gene intron. Probably assists in splicing its own and other chloroplast group II introns. The protein is Maturase K of Kalmia procumbens (Alpine azalea).